A 597-amino-acid polypeptide reads, in one-letter code: Integrator complex subunit 11 (597 aa).

6 residues coordinate Zn(2+): His68, His70, Asp72, His73, His157, and Asp178. Positions 68 to 73 match the HXHXDH motif motif; it reads HFHLDH. Residue Glu203 is part of the active site. His414 is a binding site for Zn(2+). 1D-myo-inositol hexakisphosphate is bound at residue Lys462.

This sequence belongs to the metallo-beta-lactamase superfamily. RNA-metabolizing metallo-beta-lactamase-like family. INTS11 subfamily. As to quaternary structure, belongs to the multiprotein complex Integrator, at least composed of IntS1, IntS2, IntS3, IntS4, omd/IntS5, IntS6, defl/IntS7, IntS8, IntS9, IntS10, IntS11, IntS12, asun/IntS13, IntS14 and IntS15. The core complex associates with protein phosphatase 2A subunits mts/PP2A and Pp2A-29B, to form the Integrator-PP2A (INTAC) complex. IntS11 is part of the RNA endonuclease subcomplex, composed of IntS4, IntS9, IntS11 and inositol hexakisphosphate (InsP6). Interacts with Brat1; interaction is required for the assembly of the RNA endonuclease subcomplex and inhibits the endonuclease activity of IntS11 before formation of mature integrator complex. Zn(2+) serves as cofactor. In terms of tissue distribution, expressed in neurons and glia of the larval and adult brain.

It localises to the nucleus. The protein localises to the cytoplasm. The protein resides in the cytosol. With respect to regulation, the RNA endonuclease activity is inhibited by Brat1 that forms hyrogen bond and hydrophobic interactions with the active site. Its function is as follows. RNA endonuclease component of the integrator complex, a multiprotein complex that terminates RNA polymerase II (Pol II) transcription in the promoter-proximal region of genes. The integrator complex provides a quality checkpoint during transcription elongation by driving premature transcription termination of transcripts that are unfavorably configured for transcriptional elongation: the complex terminates transcription by (1) catalyzing dephosphorylation of the C-terminal domain (CTD) of Pol II subunit Polr2A/Rbp1 and Spt5, and (2) degrading the exiting nascent RNA transcript via endonuclease activity. The integrator complex is also involved in the 3'-end processing of the U7 snRNA, and also the spliceosomal snRNAs U1, U2, U4 and U5. Within the integrator complex, IntS11 constitutes the RNA endonuclease subunit that degrades exiting nascent RNA transcripts. This Drosophila melanogaster (Fruit fly) protein is Integrator complex subunit 11.